A 103-amino-acid chain; its full sequence is Putative septation protein SpoVG (103 aa).

The protein belongs to the SpoVG family.

Its function is as follows. Could be involved in septation. The sequence is that of Putative septation protein SpoVG from Exiguobacterium sibiricum (strain DSM 17290 / CCUG 55495 / CIP 109462 / JCM 13490 / 255-15).